The sequence spans 493 residues: Cysteine sulfinic acid decarboxylase (493 aa).

Position 305 is an N6-(pyridoxal phosphate)lysine (Lys-305).

The protein belongs to the group II decarboxylase family. In terms of assembly, homodimer. Pyridoxal 5'-phosphate serves as cofactor. Expressed in brain, liver and kidney.

It catalyses the reaction L-aspartate + H(+) = beta-alanine + CO2. It carries out the reaction 3-sulfino-L-alanine + H(+) = hypotaurine + CO2. The catalysed reaction is L-cysteate + H(+) = taurine + CO2. It functions in the pathway organosulfur biosynthesis; taurine biosynthesis; hypotaurine from L-cysteine: step 2/2. Functionally, catalyzes the decarboxylation of L-aspartate, 3-sulfino-L-alanine (cysteine sulfinic acid), and L-cysteate to beta-alanine, hypotaurine and taurine, respectively. The preferred substrate is 3-sulfino-L-alanine. Does not exhibit any decarboxylation activity toward glutamate. The protein is Cysteine sulfinic acid decarboxylase (Csad) of Rattus norvegicus (Rat).